The chain runs to 799 residues: Phenylalanine--tRNA ligase beta subunit (799 aa).

The region spanning 40–147 (KSHLSSVITV…KDTTLGISVR (108 aa)) is the tRNA-binding domain. Residues 402–479 (SKTVTIETNL…RTIGYASIRT (78 aa)) enclose the B5 domain. D457, D463, E466, and E467 together coordinate Mg(2+). The 93-residue stretch at 707–799 (SHFPQGQLDL…TAKSNGYSLR (93 aa)) folds into the FDX-ACB domain.

The protein belongs to the phenylalanyl-tRNA synthetase beta subunit family. Type 1 subfamily. In terms of assembly, tetramer of two alpha and two beta subunits. Requires Mg(2+) as cofactor.

The protein resides in the cytoplasm. The enzyme catalyses tRNA(Phe) + L-phenylalanine + ATP = L-phenylalanyl-tRNA(Phe) + AMP + diphosphate + H(+). The polypeptide is Phenylalanine--tRNA ligase beta subunit (Leptospira biflexa serovar Patoc (strain Patoc 1 / Ames)).